The chain runs to 357 residues: Ion-translocating oxidoreductase complex subunit D (357 aa).

3 helical membrane-spanning segments follow: residues 35–55 (VWLYGWPALNLLLITLVTVLV), 88–108 (LPPWAPWWIGVIGGLLAVVLG), and 119–139 (LFNPAMVARVALLIAFPVEMT). Residue Thr-176 is modified to FMN phosphoryl threonine. 5 helical membrane-spanning segments follow: residues 209–229 (APGSLAEGSALLLALGGVYLI), 233–253 (VIAWEIPAVMLATLAVLATVF), 261–281 (YADAGVHILAGSTLLAAFFIA), 295–315 (AVFAAGCAVIVWVVRTYGGYP), and 316–336 (EATAFAVLLMNAFTPLIDHWI).

It belongs to the NqrB/RnfD family. In terms of assembly, the complex is composed of six subunits: RnfA, RnfB, RnfC, RnfD, RnfE and RnfG. FMN is required as a cofactor.

It is found in the cell inner membrane. Functionally, part of a membrane-bound complex that couples electron transfer with translocation of ions across the membrane. The chain is Ion-translocating oxidoreductase complex subunit D from Halorhodospira halophila (strain DSM 244 / SL1) (Ectothiorhodospira halophila (strain DSM 244 / SL1)).